The primary structure comprises 258 residues: Cobalt-precorrin-4 C(11)-methyltransferase (258 aa).

Belongs to the precorrin methyltransferase family. Homodimer.

It catalyses the reaction Co-precorrin-4 + S-adenosyl-L-methionine = Co-precorrin-5A + S-adenosyl-L-homocysteine + H(+). It participates in cofactor biosynthesis; adenosylcobalamin biosynthesis; cob(II)yrinate a,c-diamide from sirohydrochlorin (anaerobic route): step 4/10. Catalyzes the methylation of C-11 in cobalt-precorrin-4 to form cobalt-precorrin-5A. This is Cobalt-precorrin-4 C(11)-methyltransferase (cbiF) from Priestia megaterium (Bacillus megaterium).